Here is a 187-residue protein sequence, read N- to C-terminus: Elongation factor P (187 aa).

It belongs to the elongation factor P family.

It is found in the cytoplasm. It functions in the pathway protein biosynthesis; polypeptide chain elongation. Involved in peptide bond synthesis. Stimulates efficient translation and peptide-bond synthesis on native or reconstituted 70S ribosomes in vitro. Probably functions indirectly by altering the affinity of the ribosome for aminoacyl-tRNA, thus increasing their reactivity as acceptors for peptidyl transferase. The polypeptide is Elongation factor P (Treponema denticola (strain ATCC 35405 / DSM 14222 / CIP 103919 / JCM 8153 / KCTC 15104)).